The following is a 94-amino-acid chain: Integration host factor subunit beta (94 aa).

It belongs to the bacterial histone-like protein family. As to quaternary structure, heterodimer of an alpha and a beta chain.

Its function is as follows. This protein is one of the two subunits of integration host factor, a specific DNA-binding protein that functions in genetic recombination as well as in transcriptional and translational control. The polypeptide is Integration host factor subunit beta (Azorhizobium caulinodans (strain ATCC 43989 / DSM 5975 / JCM 20966 / LMG 6465 / NBRC 14845 / NCIMB 13405 / ORS 571)).